The following is a 352-amino-acid chain: MSTAVTILTDTWTRREKRFDGHAKILAIGTAIPANWVDQTTYPDFYFRITNSEHLLEYKEKFRRICNKSKIRKRHLVITEELLKKNPNLCTYNDASLNTRQDILVSEVPKLGKEAAMKAIKEWGRPISEITHLVFCTSSGVDMPGADFQLAKLLGLSSSVNRLMMYQQGCNAGAVMLRLAKDLAENNKGGRVLVVCSEVMLSVFRGPSLQQEDNLLAQCLFGDGSAAVIVGTEPRPGLETPLFELVSAAQTTIPDTDSYLKLQLREMGLTFHCSKAVPSLITQNIEDCLVKAFEPFGISDWNSIFWILHPGGNAILDGVEEKLGLEPEKLRASRDVLSQYGNLTSACVLFKP.

Residue Cys170 is part of the active site.

Belongs to the thiolase-like superfamily. Chalcone/stilbene synthases family.

It catalyses the reaction (E)-4-coumaroyl-CoA + 3 malonyl-CoA + 3 H(+) = 2',4,4',6'-tetrahydroxychalcone + 3 CO2 + 4 CoA. The protein operates within secondary metabolite biosynthesis; flavonoid biosynthesis. In terms of biological role, the primary product of this enzyme is 4,2',4',6'-tetrahydroxychalcone (also termed naringenin-chalcone or chalcone) which can under specific conditions spontaneously isomerize into naringenin. In Ipomoea purpurea (Common morning glory), this protein is Chalcone synthase C (CHSC).